Here is a 229-residue protein sequence, read N- to C-terminus: MLEMQLFFVSYVLYGLGFVSLIFLPTEHQRLYYLHLVSVIIGLIANYEMKFNILLAMFHSAVHNLWPFLKNTGYDDTEKSVYDVFCHTIMMMLCYHRIYYSQNIVIDSEYLFHVLSVLFILGAMINCLVSHLIIDSHHAQLHSIFEYTTIFQAVSTGYWVATMLWYNNLNHQDFYYHWLLWITLMTTNWFIYKFWPKLVGISMRYKYVEAVFIICTWYSGVLSSQKISC.

7 consecutive transmembrane segments (helical) span residues 6–26 (LFFVSYVLYGLGFVSLIFLPT), 36–56 (LVSVIIGLIANYEMKFNILLA), 80–99 (SVYDVFCHTIMMMLCYHRIY), 114–134 (VLSVLFILGAMINCLVSHLII), 144–164 (IFEYTTIFQAVSTGYWVATML), 174–194 (FYYHWLLWITLMTTNWFIYKF), and 207–224 (YVEAVFIICTWYSGVLSS).

This sequence belongs to the mimivirus L68/R809 family.

The protein localises to the membrane. This is an uncharacterized protein from Acanthamoeba polyphaga (Amoeba).